The primary structure comprises 160 residues: Nucleotide-binding protein VS_1405 (160 aa).

It belongs to the YajQ family.

Its function is as follows. Nucleotide-binding protein. The sequence is that of Nucleotide-binding protein VS_1405 from Vibrio atlanticus (strain LGP32) (Vibrio splendidus (strain Mel32)).